The following is a 711-amino-acid chain: Ribosomal RNA large subunit methyltransferase K/L (711 aa).

One can recognise a THUMP domain in the interval threonine 43–leucine 154.

This sequence belongs to the methyltransferase superfamily. RlmKL family.

The protein resides in the cytoplasm. The enzyme catalyses guanosine(2445) in 23S rRNA + S-adenosyl-L-methionine = N(2)-methylguanosine(2445) in 23S rRNA + S-adenosyl-L-homocysteine + H(+). It carries out the reaction guanosine(2069) in 23S rRNA + S-adenosyl-L-methionine = N(2)-methylguanosine(2069) in 23S rRNA + S-adenosyl-L-homocysteine + H(+). Its function is as follows. Specifically methylates the guanine in position 2445 (m2G2445) and the guanine in position 2069 (m7G2069) of 23S rRNA. In Haemophilus influenzae (strain ATCC 51907 / DSM 11121 / KW20 / Rd), this protein is Ribosomal RNA large subunit methyltransferase K/L.